A 421-amino-acid polypeptide reads, in one-letter code: Histidine--tRNA ligase (421 aa).

Belongs to the class-II aminoacyl-tRNA synthetase family. In terms of assembly, homodimer.

It is found in the cytoplasm. The enzyme catalyses tRNA(His) + L-histidine + ATP = L-histidyl-tRNA(His) + AMP + diphosphate + H(+). This Francisella tularensis subsp. novicida (strain U112) protein is Histidine--tRNA ligase.